A 278-amino-acid chain; its full sequence is Prohibitin-7, mitochondrial (278 aa).

The Mitochondrial matrix segment spans residues 1 to 14 (MNVKKVPNVPGSPA). A helical; Signal-anchor for type II membrane protein transmembrane segment spans residues 15 to 37 (LSALLKLGVIGGLGLYCIGSSMY). At 38-278 (NVDGGHRAIV…NSSDLLISKQ (241 aa)) the chain is on the mitochondrial intermembrane side. Positions 186–220 (KEFTEAIEKKQVAAQEAERAKFIVEKAEQDKKSAI) form a coiled coil.

It belongs to the prohibitin family. Component of a prohibitin multimeric complex in mitochondrial membranes.

Its subcellular location is the mitochondrion inner membrane. In terms of biological role, prohibitin probably acts as a holdase/unfoldase for the stabilization of newly synthesized mitochondrial proteins. This is Prohibitin-7, mitochondrial (PHB7) from Arabidopsis thaliana (Mouse-ear cress).